Here is a 184-residue protein sequence, read N- to C-terminus: Shikimate kinase (184 aa).

17-22 (SVGKTS) contributes to the ATP binding site. T21 serves as a coordination point for Mg(2+). D39 and G85 together coordinate substrate.

The protein belongs to the shikimate kinase family. In terms of assembly, monomer. Mg(2+) serves as cofactor.

It localises to the cytoplasm. The catalysed reaction is shikimate + ATP = 3-phosphoshikimate + ADP + H(+). It functions in the pathway metabolic intermediate biosynthesis; chorismate biosynthesis; chorismate from D-erythrose 4-phosphate and phosphoenolpyruvate: step 5/7. Its function is as follows. Catalyzes the specific phosphorylation of the 3-hydroxyl group of shikimic acid using ATP as a cosubstrate. The sequence is that of Shikimate kinase from Chlamydia muridarum (strain MoPn / Nigg).